The sequence spans 794 residues: Zinc finger Y-chromosomal protein 1 (794 aa).

The Nuclear localization signal signature appears at 380-389; that stretch reads TKQKLKKKRR. 13 consecutive C2H2-type zinc fingers follow at residues 411–433, 442–464, 477–499, 508–531, 537–559, 565–588, 594–616, 622–645, 651–673, 679–702, 708–730, 736–759, and 765–788; these read YPCM…MKNH, YRCT…LESH, LECE…KLTH, HICK…LAVH, HICV…MRTH, YLCQ…KTKH, FKCD…AILH, HQCL…ISVH, HKCE…EAAH, HQCR…LSVH, YRCK…MKTH, YQCE…ISIH, and HRCD…LKHH.

It belongs to the krueppel C2H2-type zinc-finger protein family. ZFX/ZFY subfamily.

It localises to the nucleus. In terms of biological role, probable transcriptional activator. This Xenopus laevis (African clawed frog) protein is Zinc finger Y-chromosomal protein 1 (zfy1).